A 142-amino-acid polypeptide reads, in one-letter code: Transcriptional regulator MraZ (142 aa).

2 consecutive SpoVT-AbrB domains span residues 5-51 (ASAL…PRPE) and 77-120 (AADV…DAAT).

Belongs to the MraZ family. As to quaternary structure, forms oligomers.

It localises to the cytoplasm. The protein resides in the nucleoid. This chain is Transcriptional regulator MraZ, found in Cupriavidus taiwanensis (strain DSM 17343 / BCRC 17206 / CCUG 44338 / CIP 107171 / LMG 19424 / R1) (Ralstonia taiwanensis (strain LMG 19424)).